A 23-amino-acid chain; its full sequence is Brevinin-1SE (23 aa).

C17 and C23 are joined by a disulfide.

In terms of tissue distribution, expressed by the skin glands.

The protein localises to the secreted. Its function is as follows. Mast cell degranulating peptide. Causes histamine release from rat peritoneal mast cells in vitro. Has antibacterial activity against the Gram-negative bacterium E.coli K12 and Gram-positive bacterium M.luteus NCT C2665. This Lithobates sevosus (Dusky gopher frog) protein is Brevinin-1SE.